A 123-amino-acid polypeptide reads, in one-letter code: Large ribosomal subunit protein bL17 (123 aa).

This sequence belongs to the bacterial ribosomal protein bL17 family. As to quaternary structure, part of the 50S ribosomal subunit. Contacts protein L32.

This is Large ribosomal subunit protein bL17 from Borrelia hermsii (strain HS1 / DAH).